The following is a 123-amino-acid chain: NHL-repeat-containing protein 4 (123 aa).

NHL repeat units follow at residues 35–78 (QPLG…FPRA) and 79–119 (GPPI…YQGL).

The chain is NHL-repeat-containing protein 4 (NHLRC4) from Homo sapiens (Human).